The primary structure comprises 201 residues: NADH-ubiquinone oxidoreductase chain 6 (201 aa).

5 consecutive transmembrane segments (helical) span residues 4 to 24 (LVLF…VISV), 28 to 48 (VFSV…LLLL), 55 to 75 (LLFL…VVMI), 88 to 108 (FYYA…IFII), and 151 to 171 (LFIL…ILTL).

Belongs to the complex I subunit 6 family.

The protein localises to the mitochondrion membrane. The catalysed reaction is a ubiquinone + NADH + 5 H(+)(in) = a ubiquinol + NAD(+) + 4 H(+)(out). Its function is as follows. Core subunit of the mitochondrial membrane respiratory chain NADH dehydrogenase (Complex I) that is believed to belong to the minimal assembly required for catalysis. Complex I functions in the transfer of electrons from NADH to the respiratory chain. The immediate electron acceptor for the enzyme is believed to be ubiquinone. The polypeptide is NADH-ubiquinone oxidoreductase chain 6 (ND6) (Cyanidium caldarium (Red alga)).